The primary structure comprises 199 residues: GTP cyclohydrolase-2 (199 aa).

49-53 (RVHSE) is a binding site for GTP. Zn(2+) contacts are provided by Cys-54, Cys-65, and Cys-67. GTP is bound by residues Gln-70, 92-94 (EGR), and Thr-114. Asp-126 acts as the Proton acceptor in catalysis. Residue Arg-128 is the Nucleophile of the active site. 2 residues coordinate GTP: Thr-149 and Lys-154.

Belongs to the GTP cyclohydrolase II family. The cofactor is Zn(2+).

It catalyses the reaction GTP + 4 H2O = 2,5-diamino-6-hydroxy-4-(5-phosphoribosylamino)-pyrimidine + formate + 2 phosphate + 3 H(+). Its pathway is cofactor biosynthesis; riboflavin biosynthesis; 5-amino-6-(D-ribitylamino)uracil from GTP: step 1/4. Catalyzes the conversion of GTP to 2,5-diamino-6-ribosylamino-4(3H)-pyrimidinone 5'-phosphate (DARP), formate and pyrophosphate. The polypeptide is GTP cyclohydrolase-2 (Baumannia cicadellinicola subsp. Homalodisca coagulata).